The chain runs to 1079 residues: Integrator complex subunit 3 homolog (1079 aa).

Disordered regions lie at residues 544-574 (ETEAVFSDEDGENLGRCTKNEENTDDDDDLP), 925-949 (YPSSSPNKRKRPSKGSSAASSTPSA), and 1010-1079 (AVGR…NDSD). Residues 938–949 (KGSSAASSTPSA) are compositionally biased toward low complexity. S1049, S1050, S1054, and S1055 each carry phosphoserine. Residues 1062–1073 (HKITQAAKKRKK) are compositionally biased toward basic residues.

The protein belongs to the Integrator subunit 3 family. Belongs to the multiprotein complex Integrator, at least composed of IntS1, IntS2, IntS3, IntS4, omd/IntS5, IntS6, defl/IntS7, IntS8, IntS9, IntS10, IntS11, IntS12, asun/IntS13, IntS14 and IntS15. The core complex associates with protein phosphatase 2A subunits mts/PP2A and Pp2A-29B, to form the Integrator-PP2A (INTAC) complex.

The protein resides in the nucleus. Its subcellular location is the cytoplasm. In terms of biological role, component of the integrator complex, a multiprotein complex that terminates RNA polymerase II (Pol II) transcription in the promoter-proximal region of genes. The integrator complex provides a quality checkpoint during transcription elongation by driving premature transcription termination of transcripts that are unfavorably configured for transcriptional elongation: the complex terminates transcription by (1) catalyzing dephosphorylation of the C-terminal domain (CTD) of Pol II subunit Polr2A/Rbp1 and Spt5, and (2) degrading the exiting nascent RNA transcript via endonuclease activity. The integrator complex is also involved in the 3'-end processing of the U7 snRNA, and also the spliceosomal snRNAs U1, U2, U4 and U5. This Drosophila mojavensis (Fruit fly) protein is Integrator complex subunit 3 homolog (IntS3).